The following is a 113-amino-acid chain: Ribonuclease P protein component (113 aa).

Belongs to the RnpA family. In terms of assembly, consists of a catalytic RNA component (M1 or rnpB) and a protein subunit.

The catalysed reaction is Endonucleolytic cleavage of RNA, removing 5'-extranucleotides from tRNA precursor.. Its function is as follows. RNaseP catalyzes the removal of the 5'-leader sequence from pre-tRNA to produce the mature 5'-terminus. It can also cleave other RNA substrates such as 4.5S RNA. The protein component plays an auxiliary but essential role in vivo by binding to the 5'-leader sequence and broadening the substrate specificity of the ribozyme. The chain is Ribonuclease P protein component from Desulforamulus reducens (strain ATCC BAA-1160 / DSM 100696 / MI-1) (Desulfotomaculum reducens).